Reading from the N-terminus, the 462-residue chain is BBSome complex member bbs-4 (462 aa).

The interval 1–46 (MEASNQDEIIGTDVIPNEQDNPEEVVPEPTSLDVPPPPPERAPSAP) is disordered. 7 TPR repeats span residues 89 to 122 (EAAF…SGKN), 124 to 156 (RYFY…MKDN), 199 to 232 (ATLI…QPDN), 234 to 266 (EVMN…DPAN), 268 to 300 (QAIL…SDYN), 335 to 368 (YKIS…YPQN), and 369 to 402 (AKAV…KKNP).

This sequence belongs to the BBS4 family. Part of BBSome complex, that contains at least bbs-1, bbs-2, bbs-4, bbs-5, osm-12, bbs-8/ttc-8 and bbs-9. Interacts (via C-terminus) with bbs-5; the interaction is direct.

It localises to the cytoplasm. Its subcellular location is the cytoskeleton. The protein resides in the microtubule organizing center. It is found in the centrosome. The protein localises to the cell projection. It localises to the cilium membrane. In terms of biological role, component of the BBSome complex. The BBSome complex is thought to function as a coat complex required for sorting of specific membrane proteins to the primary cilia. The BBSome complex is required for ciliogenesis but is dispensable for centriolar satellite function. Required for proper BBSome complex assembly and its ciliary localization. May be required for microtubule anchoring at the centrosome but not for microtubule nucleation. May be required for the dynein-mediated transport of pericentriolar proteins to the centrosome. Required, redundantly with bbs-5, for cilia biogenesis and both the assembly and movement of intraflagellar transport proteins along the ciliary axoneme. Plays a role in the removal of degraded mechanosensory receptors within the cilia. The protein is BBSome complex member bbs-4 of Caenorhabditis elegans.